Here is a 297-residue protein sequence, read N- to C-terminus: Esterase LipU (297 aa).

Active-site residues include Ser-140, Glu-239, and His-269.

The protein belongs to the 'GDXG' lipolytic enzyme family.

The protein resides in the secreted. It catalyses the reaction a fatty acid ester + H2O = an aliphatic alcohol + a fatty acid + H(+). The catalysed reaction is a butanoate ester + H2O = an aliphatic alcohol + butanoate + H(+). It carries out the reaction an acetyl ester + H2O = an aliphatic alcohol + acetate + H(+). The enzyme catalyses decanoate ester + H2O = decanoate + an aliphatic alcohol + H(+). It catalyses the reaction an octanoate ester + H2O = an aliphatic alcohol + octanoate + H(+). The catalysed reaction is a dodecanoate ester + H2O = an aliphatic alcohol + dodecanoate + H(+). It carries out the reaction hexadecanoate ester + H2O = an aliphatic alcohol + hexadecanoate + H(+). With respect to regulation, inhibited by the ionic detergent SDS and by the serine protease inhibitor PMSF. Inhibited by the FDA approved drugs Diosmin, Acarbose and Ouabain. These drugs remain bound in the active site pocket and could be probable drug candidates to combat TB disease. Functionally, esterase that shows preference for short chain fatty acids. Contributes to the growth of M.tuberculosis during the nutritive stress. Elicits strong humoral response in both extrapulmonary and relapsed cases of tuberculosis patients. The sequence is that of Esterase LipU from Mycobacterium tuberculosis (strain ATCC 25618 / H37Rv).